Reading from the N-terminus, the 406-residue chain is Argininosuccinate synthase (406 aa).

9–17 provides a ligand contact to ATP; the sequence is AYSGGLDTS. An L-citrulline-binding site is contributed by Tyr86. Gly116 is an ATP binding site. Residues Thr118, Asn122, and Asp123 each contribute to the L-aspartate site. Position 122 (Asn122) interacts with L-citrulline. The L-citrulline site is built by Arg126, Ser174, Ser183, Glu259, and Tyr271.

It belongs to the argininosuccinate synthase family. Type 1 subfamily. As to quaternary structure, homotetramer.

Its subcellular location is the cytoplasm. It catalyses the reaction L-citrulline + L-aspartate + ATP = 2-(N(omega)-L-arginino)succinate + AMP + diphosphate + H(+). Its pathway is amino-acid biosynthesis; L-arginine biosynthesis; L-arginine from L-ornithine and carbamoyl phosphate: step 2/3. The sequence is that of Argininosuccinate synthase from Geobacillus thermodenitrificans (strain NG80-2).